Reading from the N-terminus, the 98-residue chain is Integration host factor subunit alpha (98 aa).

A compositionally biased stretch (basic and acidic residues) spans 53-69 (DLREKSERPGRNPKTGE). A disordered region spans residues 53 to 73 (DLREKSERPGRNPKTGEDIPI).

Belongs to the bacterial histone-like protein family. As to quaternary structure, heterodimer of an alpha and a beta chain.

In terms of biological role, this protein is one of the two subunits of integration host factor, a specific DNA-binding protein that functions in genetic recombination as well as in transcriptional and translational control. The protein is Integration host factor subunit alpha of Aliivibrio fischeri (strain ATCC 700601 / ES114) (Vibrio fischeri).